A 95-amino-acid polypeptide reads, in one-letter code: Small ribosomal subunit protein uS17 (95 aa).

This sequence belongs to the universal ribosomal protein uS17 family. Part of the 30S ribosomal subunit.

One of the primary rRNA binding proteins, it binds specifically to the 5'-end of 16S ribosomal RNA. The protein is Small ribosomal subunit protein uS17 of Streptomyces coelicolor (strain ATCC BAA-471 / A3(2) / M145).